The sequence spans 464 residues: Leucine-rich repeat-containing protein 34 (464 aa).

The tract at residues 1–48 (MAAQPPRPVGERSMGSSREAARAPARSPAWASTQASTPGAALAVQRES) is disordered. Residues 16–32 (SSREAARAPARSPAWAS) show a composition bias toward low complexity. LRR repeat units lie at residues 295-315 (SLRY…VYLA) and 323-345 (TLEV…LSET).

In terms of assembly, interacts with NPM1 and NCL.

The protein localises to the nucleus. The protein resides in the nucleolus. It localises to the cytoplasm. Functionally, highly expressed in stem cells where it may be involved in regulation of pluripotency. In embryonic stem cells (ESCs), important for normal expression of the pluripotency regulators POU5F1/OCT4 and KLF4. Also important for expression of the ectodermal marker gene NES and the endodermal marker gene GATA4. Promotes stem cell proliferation in vitro. This is Leucine-rich repeat-containing protein 34 (LRRC34) from Homo sapiens (Human).